The following is a 40-amino-acid chain: Sulfur globule protein TR0 (40 aa).

This sequence to C.vinosum CV1 and CV2. The protein envelope of the sulfur globules is composed of the three different proteins TR0, TR1 and TR2.

Its function is as follows. Structural protein of the sulfur globules, which are intracellular globules that serve for sulfur storage in purple sulfur bacteria. This chain is Sulfur globule protein TR0, found in Thiocapsa roseopersicina.